The primary structure comprises 491 residues: Ketol-acid reductoisomerase (NADP(+)) (491 aa).

The region spanning 15–208 (AQLGKCRFMG…GGHRAGVLES (194 aa)) is the KARI N-terminal Rossmann domain. NADP(+) is bound by residues 45-48 (CGAQ), arginine 68, arginine 76, serine 78, and 108-110 (DKQ). Residue histidine 132 is part of the active site. Glycine 158 is an NADP(+) binding site. KARI C-terminal knotted domains follow at residues 209–344 (SFVA…TAPQ) and 345–484 (FEGK…MTDM). Positions 217, 221, 389, and 393 each coordinate Mg(2+). Serine 414 provides a ligand contact to substrate.

It belongs to the ketol-acid reductoisomerase family. Mg(2+) is required as a cofactor.

It carries out the reaction (2R)-2,3-dihydroxy-3-methylbutanoate + NADP(+) = (2S)-2-acetolactate + NADPH + H(+). The catalysed reaction is (2R,3R)-2,3-dihydroxy-3-methylpentanoate + NADP(+) = (S)-2-ethyl-2-hydroxy-3-oxobutanoate + NADPH + H(+). The protein operates within amino-acid biosynthesis; L-isoleucine biosynthesis; L-isoleucine from 2-oxobutanoate: step 2/4. It participates in amino-acid biosynthesis; L-valine biosynthesis; L-valine from pyruvate: step 2/4. In terms of biological role, involved in the biosynthesis of branched-chain amino acids (BCAA). Catalyzes an alkyl-migration followed by a ketol-acid reduction of (S)-2-acetolactate (S2AL) to yield (R)-2,3-dihydroxy-isovalerate. In the isomerase reaction, S2AL is rearranged via a Mg-dependent methyl migration to produce 3-hydroxy-3-methyl-2-ketobutyrate (HMKB). In the reductase reaction, this 2-ketoacid undergoes a metal-dependent reduction by NADPH to yield (R)-2,3-dihydroxy-isovalerate. This chain is Ketol-acid reductoisomerase (NADP(+)), found in Salmonella heidelberg (strain SL476).